The primary structure comprises 999 residues: Sarcoplasmic/endoplasmic reticulum calcium ATPase 3 (999 aa).

Residue Met1 is modified to N-acetylmethionine. Residues 1-48 are Cytoplasmic-facing; sequence MEAAHLLPAADVLRHFSVTAEGGLSPAQVTGARERYGPNELPSEEGKS. A Phosphoserine modification is found at Ser17. Position 19 is a phosphothreonine (Thr19). Ser25 carries the phosphoserine modification. The helical transmembrane segment at 49–69 threads the bilayer; that stretch reads LWELVLEQFEDLLVRILLLAA. The Lumenal segment spans residues 70 to 89; it reads LVSFVLAWFEEGEETTTAFV. The chain crosses the membrane as a helical span at residues 90–110; sequence EPLVIMLILVANAIVGVWQER. Residues 111–253 are Cytoplasmic-facing; it reads NAESAIEALK…PERTPLQRKL (143 aa). Residues 254 to 273 traverse the membrane as a helical segment; that stretch reads DEFGRQLSHAISVICVAVWV. The Lumenal portion of the chain corresponds to 274-295; the sequence is INIGHFADPAHGGSWLRGAVYY. A helical transmembrane segment spans residues 296–313; that stretch reads FKIAVALAVAAIPEGLPA. Residues Val304, Ala305, Ile307, and Glu309 each contribute to the Ca(2+) site. Topologically, residues 314–757 are cytoplasmic; that stretch reads VITTCLALGT…EEGRAIYSNM (444 aa). Asp351 serves as the catalytic 4-aspartylphosphate intermediate. Mg(2+)-binding residues include Asp351 and Thr353. Residue Thr353 participates in ATP binding. Residues 370–400 form an interaction with phospholamban 1 region; it reads AEADAGSCLLHEFTISGTTYTPEGEVRQGDQ. A Phosphothreonine modification is found at Thr415. ATP contacts are provided by Glu442, Arg489, Lys515, Arg560, Thr625, Gly626, and Asp627. Ser662 carries the post-translational modification Phosphoserine. Residues Arg678 and Lys684 each coordinate ATP. Residue Asp703 coordinates Mg(2+). Asn706 lines the ATP pocket. The helical transmembrane segment at 758 to 777 threads the bilayer; the sequence is KQFIRYLISSNVGEVVCIFL. Asn768 and Glu771 together coordinate Ca(2+). The Lumenal segment spans residues 778 to 787; that stretch reads TAILGLPEAL. The helical transmembrane segment at 788–808 threads the bilayer; the sequence is IPVQLLWVNLVTDGLPATALG. The interval 788–808 is interaction with phospholamban 2; that stretch reads IPVQLLWVNLVTDGLPATALG. Ca(2+)-binding residues include Asn796, Thr799, and Asp800. The Cytoplasmic portion of the chain corresponds to 809–828; that stretch reads FNPPDLDIMEKLPRSPREAL. Residues 829–851 form a helical membrane-spanning segment; sequence ISGWLFFRYLAIGVYVGLATVAA. Residues 852 to 897 are Lumenal-facing; it reads ATWWFVYDAEGPHINFYQLRNFLKCSEDNPLFAGIDCEVFESRFPT. The helical transmembrane segment at 898 to 917 threads the bilayer; sequence TMALSVLVTIEMCNALNSVS. Glu908 lines the Ca(2+) pocket. The Cytoplasmic segment spans residues 918–930; the sequence is ENQSLLRMPPWMN. A helical membrane pass occupies residues 931–949; the sequence is PWLLVAVAMSMALHFLILL. The Lumenal portion of the chain corresponds to 950-964; the sequence is VPPLPLIFQVTPLSG. Residues 965–985 traverse the membrane as a helical segment; it reads RQWVVVLQISLPVILLDEALK. The Cytoplasmic portion of the chain corresponds to 986–999; that stretch reads YLSRNHMHEEMSQK.

It belongs to the cation transport ATPase (P-type) (TC 3.A.3) family. Type IIA subfamily. Interacts with sarcolipin (SLN). Interacts with phospholamban (PLN). Interacts with myoregulin (MRLN). Interacts with DWORF. Interacts with VMP1. Interacts with TUNAR; the interaction occurs at low levels in low glucose conditions and is increased by high glucose levels. It depends on Mg(2+) as a cofactor. Found in most tissues. Most abundant in thymus, trachea, salivary gland, spleen, bone marrow, lymph node, peripheral leukocytes, pancreas and colon. Also detected in fetal tissues. Expressed in cell lineages of hematopoietic, epithelial, or embryonic origin and also expressed in several cancer cell lines.

The protein resides in the nucleus membrane. It localises to the endoplasmic reticulum membrane. The protein localises to the sarcoplasmic reticulum membrane. The catalysed reaction is Ca(2+)(in) + ATP + H2O = Ca(2+)(out) + ADP + phosphate + H(+). With respect to regulation, inhibited by sarcolipin (SLN), phospholamban (PLN) and myoregulin (MRLN). Enhanced by DWORF; DWORF increases activity by displacing sarcolipin (SLN), phospholamban (PLN) and myoregulin (MRLN). Its function is as follows. This magnesium-dependent enzyme catalyzes the hydrolysis of ATP coupled with the transport of calcium. Transports calcium ions from the cytosol into the sarcoplasmic/endoplasmic reticulum lumen. Contributes to calcium sequestration involved in muscular excitation/contraction. The sequence is that of Sarcoplasmic/endoplasmic reticulum calcium ATPase 3 from Homo sapiens (Human).